Here is a 364-residue protein sequence, read N- to C-terminus: tRNA-specific 2-thiouridylase MnmA (364 aa).

Residues 13–20 (GMSGGVDS) and M39 each bind ATP. The interval 99-101 (NPD) is interaction with target base in tRNA. The Nucleophile role is filled by C104. C104 and C200 are joined by a disulfide. G128 contributes to the ATP binding site. The segment at 150-152 (KDQ) is interaction with tRNA. The active-site Cysteine persulfide intermediate is the C200. The tract at residues 310–311 (RY) is interaction with tRNA.

It belongs to the MnmA/TRMU family.

It is found in the cytoplasm. It catalyses the reaction S-sulfanyl-L-cysteinyl-[protein] + uridine(34) in tRNA + AH2 + ATP = 2-thiouridine(34) in tRNA + L-cysteinyl-[protein] + A + AMP + diphosphate + H(+). In terms of biological role, catalyzes the 2-thiolation of uridine at the wobble position (U34) of tRNA, leading to the formation of s(2)U34. In Alkaliphilus oremlandii (strain OhILAs) (Clostridium oremlandii (strain OhILAs)), this protein is tRNA-specific 2-thiouridylase MnmA.